Reading from the N-terminus, the 325-residue chain is UPF0324 membrane protein Bd1437 (325 aa).

The next 8 helical transmembrane spans lie at Ile21 to Leu43, Tyr58 to Gly80, Ile87 to Gly105, Ser115 to Ile137, Val144 to Gly166, Ala211 to Gly230, Pro243 to Pro260, and Leu302 to Ile324.

The protein belongs to the UPF0324 family.

The protein localises to the cell membrane. The polypeptide is UPF0324 membrane protein Bd1437 (Bdellovibrio bacteriovorus (strain ATCC 15356 / DSM 50701 / NCIMB 9529 / HD100)).